Here is a 104-residue protein sequence, read N- to C-terminus: Large ribosomal subunit protein bL21 (104 aa).

The protein belongs to the bacterial ribosomal protein bL21 family. In terms of assembly, part of the 50S ribosomal subunit. Contacts protein L20.

In terms of biological role, this protein binds to 23S rRNA in the presence of protein L20. This chain is Large ribosomal subunit protein bL21, found in Acidiphilium cryptum (strain JF-5).